A 339-amino-acid chain; its full sequence is Inositol 2-dehydrogenase 2 (339 aa).

The protein belongs to the Gfo/Idh/MocA family. In terms of assembly, homotetramer.

The enzyme catalyses myo-inositol + NAD(+) = scyllo-inosose + NADH + H(+). In terms of biological role, involved in the oxidation of myo-inositol (MI) to 2-keto-myo-inositol (2KMI or 2-inosose). The sequence is that of Inositol 2-dehydrogenase 2 from Saccharopolyspora erythraea (strain ATCC 11635 / DSM 40517 / JCM 4748 / NBRC 13426 / NCIMB 8594 / NRRL 2338).